The following is a 457-amino-acid chain: MTKKVYVKTFGCQMNEYDSDKMVDVLNAAEGLEKTDTPEDADIILFNTCSVREKAQEKVFSDLGRVRELKEAKPDLLIGVGGCVASQEGASIVARAPYVDLVFGPQTLHRLPQMIDARRESGRAQVDITFPEIEKFDHLPPARVEGPSAFVSIMEGCSKYCSYCVVPYTRGDEVSRPLDDVLTEVAGLADQGVREVTLLGQNVNAYRGAIAAGSAEIADFATLIEYVADIPGIERIRYTTSHPKEFTQRLLDVYAKVPKLVDHLHLPVQHGSDRILMAMKRGYTVLEYKSVIRKLRAIRPNLSLSTDIIVGFPGETDADFDKTMALVHEMSYDTSFSFIYSPRPGTPAANLADDTPRELKLKRLQHLQATIEENVARISQSMLGKVERILVEGPSRKDPNELAGRTENNRVVNFPAPSAAHPRLIGQMIDVKINHAYPHSLRGELVLAHGDASAATH.

The MTTase N-terminal domain occupies 3–120 (KKVYVKTFGC…LPQMIDARRE (118 aa)). [4Fe-4S] cluster is bound by residues Cys12, Cys49, Cys83, Cys157, Cys161, and Cys164. Residues 143-377 (RVEGPSAFVS…QATIEENVAR (235 aa)) enclose the Radical SAM core domain. Residues 380-447 (QSMLGKVERI…PHSLRGELVL (68 aa)) form the TRAM domain.

It belongs to the methylthiotransferase family. MiaB subfamily. In terms of assembly, monomer. The cofactor is [4Fe-4S] cluster.

The protein resides in the cytoplasm. The enzyme catalyses N(6)-dimethylallyladenosine(37) in tRNA + (sulfur carrier)-SH + AH2 + 2 S-adenosyl-L-methionine = 2-methylsulfanyl-N(6)-dimethylallyladenosine(37) in tRNA + (sulfur carrier)-H + 5'-deoxyadenosine + L-methionine + A + S-adenosyl-L-homocysteine + 2 H(+). Functionally, catalyzes the methylthiolation of N6-(dimethylallyl)adenosine (i(6)A), leading to the formation of 2-methylthio-N6-(dimethylallyl)adenosine (ms(2)i(6)A) at position 37 in tRNAs that read codons beginning with uridine. This chain is tRNA-2-methylthio-N(6)-dimethylallyladenosine synthase, found in Burkholderia mallei (strain NCTC 10247).